The sequence spans 278 residues: DNA oxidative demethylase ALKBH2 (278 aa).

Residues 1–49 (MDRFLVKGAVGSLKRRMEQEQTGGGPAGLAEEEGNSKKNPRRAAPGNGV) form a disordered region. Residues 3 to 7 (RFLVK) carry the PCNA-binding motif. Substrate is bound by residues 101-103 (FGK) and 121-123 (YTF). In terms of domain architecture, Fe2OG dioxygenase spans 151-256 (TFNFVLINRY…RVNLTFRKIL (106 aa)). Residues N158, Y160, and H170 each contribute to the 2-oxoglutarate site. H170 and D172 together coordinate Fe cation. Substrate is bound at residue D173. 2-oxoglutarate contacts are provided by H235, R247, T251, and R253. H235 contacts Fe cation.

This sequence belongs to the alkB family. Interacts with PCNA homotrimer; this interaction is enhanced during the S-phase of the cell cycle. Interacts with nucleolar proteins NCL, UBTF and NPM1. Interacts with XRCC5-XRCC6 heterodimer. Fe(2+) serves as cofactor.

It is found in the nucleus. Its subcellular location is the nucleolus. The protein localises to the nucleoplasm. It carries out the reaction a methylated nucleobase within DNA + 2-oxoglutarate + O2 = a nucleobase within DNA + formaldehyde + succinate + CO2. The catalysed reaction is an N(1)-methyl-2'-deoxyadenosine in double-stranded DNA + 2-oxoglutarate + O2 = a 2'-deoxyadenosine in double-stranded DNA + formaldehyde + succinate + CO2 + H(+). The enzyme catalyses an N(1)-methyl-2'-deoxyadenosine in single-stranded DNA + 2-oxoglutarate + O2 = a 2'-deoxyadenosine in single-stranded DNA + formaldehyde + succinate + CO2 + H(+). It catalyses the reaction an N(3)-methyl-2'-deoxycytidine in double-stranded DNA + 2-oxoglutarate + O2 = a 2'-deoxycytidine in double-stranded DNA + formaldehyde + succinate + CO2 + H(+). It carries out the reaction an N(3)-methyl-2'-deoxycytidine in single-stranded DNA + 2-oxoglutarate + O2 = a 2'-deoxycytidine in single-stranded DNA + formaldehyde + succinate + CO2 + H(+). The catalysed reaction is a 1,N(6)-etheno-2'-deoxyadenosine in double-stranded DNA + 2-oxoglutarate + O2 + H2O = a 2'-deoxyadenosine in double-stranded DNA + glyoxal + succinate + CO2. The enzyme catalyses a 1,N(6)-etheno-2'-deoxyadenosine in single-stranded DNA + 2-oxoglutarate + O2 + H2O = a 2'-deoxyadenosine in single-stranded DNA + glyoxal + succinate + CO2. It catalyses the reaction a 3,N(4)-etheno-2'-deoxycytidine in double-stranded DNA + 2-oxoglutarate + O2 + H2O = a 2'-deoxycytidine in double-stranded DNA + glyoxal + succinate + CO2. It carries out the reaction a 3,N(4)-etheno-2'-deoxycytidine in single-stranded DNA + 2-oxoglutarate + O2 + H2O = a 2'-deoxycytidine in single-stranded DNA + glyoxal + succinate + CO2. The catalysed reaction is a 1,N(2)-etheno-2'-deoxyguanosine in double-stranded DNA + 2-oxoglutarate + O2 + H2O = a 2'-deoxyguanosine in double-stranded DNA + glyoxal + succinate + CO2. With respect to regulation, activated by ascorbate and magnesium ions. Dioxygenase that repairs alkylated nucleic acid bases by direct reversal oxidative dealkylation. Can process both double-stranded (ds) and single-stranded (ss) DNA substrates, with a strong preference for dsDNA. Uses molecular oxygen, 2-oxoglutarate and iron as cofactors to oxidize the alkyl groups that are subsequently released as aldehydes, regenerating the undamaged bases. Probes the base pair stability, locates a weakened base pair and flips the damaged base to accommodate the lesion in its active site for efficient catalysis. Repairs monoalkylated bases, specifically N1-methyladenine and N3-methylcytosine, as well as higher order alkyl adducts such as bases modified with exocyclic bridged adducts known as etheno adducts including 1,N6-ethenoadenine, 3,N4-ethenocytosine and 1,N2-ethenoguanine. Acts as a gatekeeper of genomic integrity under alkylation stress. Efficiently repairs alkylated lesions in ribosomal DNA (rDNA). These lesions can cause ss- and dsDNA strand breaks that severely impair rDNA transcription. In a response mechanism to DNA damage, associates with PCNA at replication forks to repair alkylated adducts prior to replication. The polypeptide is DNA oxidative demethylase ALKBH2 (ALKBH2) (Bos taurus (Bovine)).